Here is a 61-residue protein sequence, read N- to C-terminus: Small ribosomal subunit protein uS14 (61 aa).

Zn(2+)-binding residues include C24, C27, C40, and C43.

This sequence belongs to the universal ribosomal protein uS14 family. Zinc-binding uS14 subfamily. Part of the 30S ribosomal subunit. Contacts proteins S3 and S10. Requires Zn(2+) as cofactor.

Functionally, binds 16S rRNA, required for the assembly of 30S particles and may also be responsible for determining the conformation of the 16S rRNA at the A site. In Roseiflexus sp. (strain RS-1), this protein is Small ribosomal subunit protein uS14.